An 870-amino-acid polypeptide reads, in one-letter code: Radial spoke head 10 homolog B2 (870 aa).

The segment covering 1–16 has biased composition (basic and acidic residues); that stretch reads MVKEKKKADKKGEKSA. The disordered stretch occupies residues 1-44; the sequence is MVKEKKKADKKGEKSARSPSSLSDNLDFSKQDGNTTRQEMSPAG. A compositionally biased stretch (polar residues) spans 17–39; that stretch reads RSPSSLSDNLDFSKQDGNTTRQE. MORN repeat units follow at residues 86–108, 109–131, 132–154, 155–177, 179–201, 204–226, 227–249, 251–273, 284–306, and 307–329; these read YEGEKVRGLYEGEGFAAFQGGCT, YRGMFSEGLMHGQGTYIWADGLK, YEGDFVKNVPMNHGVYTWPDGSM, YEGEVVNGMRNGFGMFKCSTQPV, YIGHWCNGKRHGKGSIYYNQEGT, YEGDWVQNIKKGWGIRCYKSGNI, YEGQWEDNMRHGEGRMRWLTTNE, YTGRWERGIQNGFGTHTWFLKRI, YIGEFVNGYRHGRGKFYYASGAM, and YDGEWVSNKKHGMGRLTFKNGRV. The segment at 674-704 is disordered; that stretch reads NKSPSAVMSHESDAAHSDSARSSSSKLELSP. Positions 683–692 are enriched in basic and acidic residues; that stretch reads HESDAAHSDS. Positions 693-703 are enriched in low complexity; the sequence is ARSSSSKLELS. Positions 784–811 form a coiled coil; that stretch reads KEKIRADRLRSTAQAQQRKMEDDELEAR. Residues 840–870 form a disordered region; it reads VSSSHLILDPPKEDVTVSPSSKTITSKKKKK.

As to quaternary structure, interacts with RSPH6A. Does not appear to be part of the axonemal radial spoke complexes 1 or 2.

It is found in the cytoplasm. Its subcellular location is the cytoskeleton. The protein resides in the cilium axoneme. The protein localises to the cell projection. It localises to the cilium. It is found in the flagellum. Its function is as follows. May function as part of the axonemal radial spoke complex 3 (RS3). Radial spoke complexes are important for ciliary motility. This is Radial spoke head 10 homolog B2 (RSPH10B2) from Homo sapiens (Human).